Here is a 414-residue protein sequence, read N- to C-terminus: Glucose-6-phosphate isomerase (414 aa).

The Proton donor role is filled by glutamate 266. Catalysis depends on residues histidine 292 and lysine 405.

The protein belongs to the GPI family.

It is found in the cytoplasm. The catalysed reaction is alpha-D-glucose 6-phosphate = beta-D-fructose 6-phosphate. Its pathway is carbohydrate biosynthesis; gluconeogenesis. The protein operates within carbohydrate degradation; glycolysis; D-glyceraldehyde 3-phosphate and glycerone phosphate from D-glucose: step 2/4. Functionally, catalyzes the reversible isomerization of glucose-6-phosphate to fructose-6-phosphate. The polypeptide is Glucose-6-phosphate isomerase (Thermus thermophilus (strain ATCC BAA-163 / DSM 7039 / HB27)).